The following is a 463-amino-acid chain: Ribosomal protein uS12 methylthiotransferase RimO (463 aa).

The 116-residue stretch at 15-130 (PKVGMVSLGC…VMQVVHSHLP (116 aa)) folds into the MTTase N-terminal domain. [4Fe-4S] cluster-binding residues include Cys24, Cys60, Cys89, Cys161, Cys165, and Cys168. Residues 147–392 (LTPRHYAYLK…MEVAEEVSAA (246 aa)) form the Radical SAM core domain. A TRAM domain is found at 395-463 (ERKVGKTLKV…ADGHDLWGEV (69 aa)).

This sequence belongs to the methylthiotransferase family. RimO subfamily. [4Fe-4S] cluster is required as a cofactor.

The protein localises to the cytoplasm. It catalyses the reaction L-aspartate(89)-[ribosomal protein uS12]-hydrogen + (sulfur carrier)-SH + AH2 + 2 S-adenosyl-L-methionine = 3-methylsulfanyl-L-aspartate(89)-[ribosomal protein uS12]-hydrogen + (sulfur carrier)-H + 5'-deoxyadenosine + L-methionine + A + S-adenosyl-L-homocysteine + 2 H(+). Functionally, catalyzes the methylthiolation of an aspartic acid residue of ribosomal protein uS12. The chain is Ribosomal protein uS12 methylthiotransferase RimO from Burkholderia thailandensis (strain ATCC 700388 / DSM 13276 / CCUG 48851 / CIP 106301 / E264).